The following is a 361-amino-acid chain: MTTMYVSRVSTRPLSAQSAAQLSKAVAFFAQSYRLSSNACTAPTPSRRAFTSASKIQVKGRDLFPEPEHGQIKRTEPAWPHPPYTAEQMRSKVYFAHRKPRDFSDRVALGMVRFLRWCTDFATGYKHNVEAPKKASDSNALTATKPYQMSERKWLIRYVFLESVAGVPGMVAGMLRHLRSLRGLKRDNGWIETLLEEAYNERMHLLTFLKMYEPGIFMRTMILGAQGVFFNSFFLCYLFSPRTCHRFVGYLEEEAVLTYTLSIQDLENGHLPKWADPDFKAPDLAVEYWGMPEGNRSMRDLLYYIRADEAKHREVNHTLGNLKQDEDPNPFVSEYGKERGEKPGKGIESLKPVGWERDEVI.

Residues 155 to 175 (LIRYVFLESVAGVPGMVAGML) form a helical membrane-spanning segment. Fe cation contacts are provided by Glu-162, Glu-201, and His-204. Residues 221–241 (MILGAQGVFFNSFFLCYLFSP) traverse the membrane as a helical segment. Glu-252, Glu-253, Glu-309, and His-312 together coordinate Fe cation. The tract at residues 320 to 361 (GNLKQDEDPNPFVSEYGKERGEKPGKGIESLKPVGWERDEVI) is disordered. Residues 335–345 (YGKERGEKPGK) show a composition bias toward basic and acidic residues.

Belongs to the alternative oxidase family. Requires Fe cation as cofactor.

It is found in the mitochondrion inner membrane. Functionally, catalyzes cyanide-resistant oxygen consumption. May increase respiration when the cytochrome respiratory pathway is restricted, or in response to low temperatures. The protein is Alternative oxidase, mitochondrial (aox) of Botryotinia fuckeliana (Noble rot fungus).